Here is a 351-residue protein sequence, read N- to C-terminus: Photosystem II D2 protein (351 aa).

Residues 39-59 traverse the membrane as a helical segment; it reads CSYLALGAWFTGTTFVTSWYT. His-116 lines the chlorophyll a pocket. Residues 123–139 traverse the membrane as a helical segment; the sequence is GFCLRQFEIARLVGLRP. Gln-128 and Asn-141 together coordinate pheophytin a. A helical membrane pass occupies residues 151–164; sequence VFVSVFLLYPLGQA. Residue His-196 coordinates chlorophyll a. The chain crosses the membrane as a helical span at residues 206-226; that stretch reads GALLCAIHGATVQNTLFEDGE. A plastoquinone is bound by residues His-213 and Phe-260. His-213 lines the Fe cation pocket. Residue His-267 participates in Fe cation binding. The chain crosses the membrane as a helical span at residues 277 to 293; sequence GLWASSIGIVGLALNLR.

The protein belongs to the reaction center PufL/M/PsbA/D family. PSII is composed of 1 copy each of membrane proteins PsbA, PsbB, PsbC, PsbD, PsbE, PsbF, PsbH, PsbI, PsbJ, PsbK, PsbL, PsbM, PsbT, PsbX, PsbY, PsbZ, Psb30/Ycf12, at least 3 peripheral proteins of the oxygen-evolving complex and a large number of cofactors. It forms dimeric complexes. The D1/D2 heterodimer binds P680, chlorophylls that are the primary electron donor of PSII, and subsequent electron acceptors. It shares a non-heme iron and each subunit binds pheophytin, quinone, additional chlorophylls, carotenoids and lipids. There is also a Cl(-1) ion associated with D1 and D2, which is required for oxygen evolution. The PSII complex binds additional chlorophylls, carotenoids and specific lipids. serves as cofactor.

Its subcellular location is the plastid. It localises to the chloroplast thylakoid membrane. It carries out the reaction 2 a plastoquinone + 4 hnu + 2 H2O = 2 a plastoquinol + O2. Functionally, photosystem II (PSII) is a light-driven water:plastoquinone oxidoreductase that uses light energy to abstract electrons from H(2)O, generating O(2) and a proton gradient subsequently used for ATP formation. It consists of a core antenna complex that captures photons, and an electron transfer chain that converts photonic excitation into a charge separation. The D1/D2 (PsbA/PsbD) reaction center heterodimer binds P680, the primary electron donor of PSII as well as several subsequent electron acceptors. D2 is needed for assembly of a stable PSII complex. The protein is Photosystem II D2 protein of Cyanidioschyzon merolae (strain NIES-3377 / 10D) (Unicellular red alga).